Consider the following 145-residue polypeptide: Protein MMF1, mitochondrial (145 aa).

Residues 1 to 17 (MFLRNSVLRTAPVLRRG) constitute a mitochondrion transit peptide.

The protein belongs to the RutC family.

The protein localises to the mitochondrion matrix. Its function is as follows. Plays a role in the maintenance of mitochondrial DNA. This is Protein MMF1, mitochondrial (MMF1) from Saccharomyces cerevisiae (strain ATCC 204508 / S288c) (Baker's yeast).